Reading from the N-terminus, the 121-residue chain is Spermidine export protein MdtJ (121 aa).

Helical transmembrane passes span 1–21 (MYIY…GTLS), 32–52 (GGFI…SFAV), 55–75 (IALG…ITLF), and 82–102 (ESLS…IVLI).

Belongs to the drug/metabolite transporter (DMT) superfamily. Small multidrug resistance (SMR) (TC 2.A.7.1) family. MdtJ subfamily. Forms a complex with MdtI.

It localises to the cell inner membrane. Its function is as follows. Catalyzes the excretion of spermidine. The sequence is that of Spermidine export protein MdtJ from Escherichia coli O127:H6 (strain E2348/69 / EPEC).